Here is a 303-residue protein sequence, read N- to C-terminus: Coenzyme PQQ synthesis protein B (303 aa).

Belongs to the PqqB family.

Its pathway is cofactor biosynthesis; pyrroloquinoline quinone biosynthesis. May be involved in the transport of PQQ or its precursor to the periplasm. The sequence is that of Coenzyme PQQ synthesis protein B from Acinetobacter baumannii (strain AYE).